We begin with the raw amino-acid sequence, 329 residues long: GTP 3',8-cyclase (329 aa).

The region spanning 8 to 234 (AFARKFYYLR…QLRQRSDGPA (227 aa)) is the Radical SAM core domain. Residue R17 coordinates GTP. [4Fe-4S] cluster-binding residues include C24 and C28. Y30 is an S-adenosyl-L-methionine binding site. C31 is a binding site for [4Fe-4S] cluster. Position 68 (R68) interacts with GTP. An S-adenosyl-L-methionine-binding site is contributed by G72. T99 lines the GTP pocket. An S-adenosyl-L-methionine-binding site is contributed by S123. K160 lines the GTP pocket. M194 contributes to the S-adenosyl-L-methionine binding site. 2 residues coordinate [4Fe-4S] cluster: C257 and C260. 262-264 (RLR) serves as a coordination point for GTP. Residue C274 coordinates [4Fe-4S] cluster.

Belongs to the radical SAM superfamily. MoaA family. In terms of assembly, monomer and homodimer. The cofactor is [4Fe-4S] cluster.

The catalysed reaction is GTP + AH2 + S-adenosyl-L-methionine = (8S)-3',8-cyclo-7,8-dihydroguanosine 5'-triphosphate + 5'-deoxyadenosine + L-methionine + A + H(+). It functions in the pathway cofactor biosynthesis; molybdopterin biosynthesis. Its function is as follows. Catalyzes the cyclization of GTP to (8S)-3',8-cyclo-7,8-dihydroguanosine 5'-triphosphate. The protein is GTP 3',8-cyclase of Escherichia fergusonii (strain ATCC 35469 / DSM 13698 / CCUG 18766 / IAM 14443 / JCM 21226 / LMG 7866 / NBRC 102419 / NCTC 12128 / CDC 0568-73).